Consider the following 358-residue polypeptide: uncharacterized protein (358 aa).

Residue 29–36 (GPINSGKT) coordinates ATP.

The protein belongs to the archaeal ATPase family.

This is an uncharacterized protein from Methanocaldococcus jannaschii (strain ATCC 43067 / DSM 2661 / JAL-1 / JCM 10045 / NBRC 100440) (Methanococcus jannaschii).